We begin with the raw amino-acid sequence, 115 residues long: Cytochrome c (115 aa).

The heme c site is built by Cys-26, Cys-29, His-30, and Met-91.

This sequence belongs to the cytochrome c family. Binds 1 heme c group covalently per subunit.

The protein localises to the mitochondrion intermembrane space. Functionally, electron carrier protein. The oxidized form of the cytochrome c heme group can accept an electron from the heme group of the cytochrome c1 subunit of cytochrome reductase. Cytochrome c then transfers this electron to the cytochrome oxidase complex, the final protein carrier in the mitochondrial electron-transport chain. In Theileria annulata, this protein is Cytochrome c.